The following is a 306-amino-acid chain: Porphobilinogen deaminase (306 aa).

Cysteine 244 carries the post-translational modification S-(dipyrrolylmethanemethyl)cysteine.

Belongs to the HMBS family. In terms of assembly, monomer. Requires dipyrromethane as cofactor.

It catalyses the reaction 4 porphobilinogen + H2O = hydroxymethylbilane + 4 NH4(+). It participates in porphyrin-containing compound metabolism; protoporphyrin-IX biosynthesis; coproporphyrinogen-III from 5-aminolevulinate: step 2/4. Tetrapolymerization of the monopyrrole PBG into the hydroxymethylbilane pre-uroporphyrinogen in several discrete steps. In Streptococcus sanguinis (strain SK36), this protein is Porphobilinogen deaminase.